The primary structure comprises 118 residues: Large ribosomal subunit protein bL20 (118 aa).

Belongs to the bacterial ribosomal protein bL20 family.

Binds directly to 23S ribosomal RNA and is necessary for the in vitro assembly process of the 50S ribosomal subunit. It is not involved in the protein synthesizing functions of that subunit. This chain is Large ribosomal subunit protein bL20, found in Hamiltonella defensa subsp. Acyrthosiphon pisum (strain 5AT).